The chain runs to 399 residues: uncharacterized protein (399 aa).

The next 10 membrane-spanning stretches (helical) occupy residues 7 to 27 (FSAL…LYLI), 33 to 53 (FLQI…FEVP), 79 to 99 (AFFP…IWAL), 131 to 151 (LLIT…SLNI), 153 to 173 (FPFL…SVFI), 208 to 228 (VLLI…ISRY), 242 to 262 (SLGY…TLTI), 296 to 316 (PLGI…HPIV), 335 to 355 (LNSG…GIIS), and 357 to 377 (AFGL…PIIL).

The protein belongs to the major facilitator superfamily. Drug:H(+) antiporter-3 (DHA3) (TC 2.A.1.21) family.

Its subcellular location is the cell membrane. This is an uncharacterized protein from Bacillus subtilis (strain 168).